Here is a 332-residue protein sequence, read N- to C-terminus: Ribose-phosphate pyrophosphokinase (332 aa).

55-57 provides a ligand contact to ATP; it reads DGE. Residues His-148 and Asp-187 each coordinate Mg(2+). The active site involves Lys-211. D-ribose 5-phosphate is bound by residues Arg-213, Asp-237, and 241–245; that span reads DTGGT.

The protein belongs to the ribose-phosphate pyrophosphokinase family. Class I subfamily. Homohexamer. The cofactor is Mg(2+).

Its subcellular location is the cytoplasm. It catalyses the reaction D-ribose 5-phosphate + ATP = 5-phospho-alpha-D-ribose 1-diphosphate + AMP + H(+). It participates in metabolic intermediate biosynthesis; 5-phospho-alpha-D-ribose 1-diphosphate biosynthesis; 5-phospho-alpha-D-ribose 1-diphosphate from D-ribose 5-phosphate (route I): step 1/1. Involved in the biosynthesis of the central metabolite phospho-alpha-D-ribosyl-1-pyrophosphate (PRPP) via the transfer of pyrophosphoryl group from ATP to 1-hydroxyl of ribose-5-phosphate (Rib-5-P). The chain is Ribose-phosphate pyrophosphokinase from Prochlorococcus marinus (strain MIT 9313).